The primary structure comprises 266 residues: Dihydropteroate synthase (266 aa).

The Pterin-binding domain occupies Ala12–Ala260. Residue Asn19 coordinates Mg(2+). (7,8-dihydropterin-6-yl)methyl diphosphate contacts are provided by residues Thr59, Asp93, Asn112, Asp176, Lys212, and Arg248–His250.

This sequence belongs to the DHPS family. As to quaternary structure, homodimer or homotrimer. The cofactor is Mg(2+).

It catalyses the reaction (7,8-dihydropterin-6-yl)methyl diphosphate + 4-aminobenzoate = 7,8-dihydropteroate + diphosphate. It functions in the pathway cofactor biosynthesis; tetrahydrofolate biosynthesis; 7,8-dihydrofolate from 2-amino-4-hydroxy-6-hydroxymethyl-7,8-dihydropteridine diphosphate and 4-aminobenzoate: step 1/2. Its function is as follows. Catalyzes the condensation of para-aminobenzoate (pABA) with 6-hydroxymethyl-7,8-dihydropterin diphosphate (DHPt-PP) to form 7,8-dihydropteroate (H2Pte), the immediate precursor of folate derivatives. This Streptococcus pyogenes serotype M3 (strain ATCC BAA-595 / MGAS315) protein is Dihydropteroate synthase (folP).